The primary structure comprises 128 residues: Glycine cleavage system H protein (128 aa).

A Lipoyl-binding domain is found at 24-106; the sequence is VYTVGITEHA…YAEGFLFQIK (83 aa). Position 65 is an N6-lipoyllysine (lysine 65).

The protein belongs to the GcvH family. In terms of assembly, the glycine cleavage system is composed of four proteins: P, T, L and H. The cofactor is (R)-lipoate.

Functionally, the glycine cleavage system catalyzes the degradation of glycine. The H protein shuttles the methylamine group of glycine from the P protein to the T protein. The protein is Glycine cleavage system H protein of Serratia proteamaculans (strain 568).